Reading from the N-terminus, the 854-residue chain is Nucleolar MIF4G domain-containing protein 1 (854 aa).

The interval 2 to 275 (PRNVPEVNGV…EEDPDWQVLQ (274 aa)) is necessary for nucleolar localization and for targeting PPP1CA to the nucleolus. Residue serine 60 is modified to Phosphoserine. Disordered stretches follow at residues 66–215 (ESRS…PLSF) and 231–333 (SGGG…GEKY). Residues 76-99 (PGGRKSRKELRKEKRHLRKARRLQ) show a composition bias toward basic residues. The span at 104-113 (SGSGDQGGNV) shows a compositional bias: gly residues. The span at 128–173 (VRPTPAKATATPAKASAPSTNTKASAAQPKAKAKGAPGKPGPATAT) shows a compositional bias: low complexity. Positions 188–197 (REIRKLERCL) are enriched in basic and acidic residues. Residues 265–280 (SEEDPDWQVLQEDQED) are compositionally biased toward acidic residues. 3 stretches are compositionally biased toward basic and acidic residues: residues 281 to 291 (VNSKRRGEAES), 303 to 315 (RFAE…RSSS), and 322 to 331 (QESHSVESGE). Positions 301–304 (KVRF) match the Required for efficient binding to PPP1CA and for targeting PPP1CA to the nucleolus motif. Serine 311, serine 314, and serine 315 each carry phosphoserine. The region spanning 356–553 (KKHVKGLINR…ETMLALKNND (198 aa)) is the MIF4G domain. The 117-residue stretch at 648-764 (DVRRIIFCTL…PLSVLKVVEF (117 aa)) folds into the MI domain.

Belongs to the CWC22 family. As to quaternary structure, may interact with EIF4A1, EIF4A2 and EIF4A3. Interacts with PPP1CA and PPP1CC.

It is found in the nucleus. The protein localises to the nucleolus. In terms of biological role, plays a role in targeting PPP1CA to the nucleolus. The sequence is that of Nucleolar MIF4G domain-containing protein 1 (Nom1) from Mus musculus (Mouse).